The chain runs to 550 residues: Cyclopentanone 1,2-monooxygenase (550 aa).

FAD contacts are provided by residues 31 to 32 (FT), D51, W60, D71, Y77, and V123.

The protein belongs to the FAD-binding monooxygenase family. As to quaternary structure, homotetramer. It depends on FAD as a cofactor.

The enzyme catalyses cyclopentanone + NADPH + O2 + H(+) = 5-valerolactone + NADP(+) + H2O. It functions in the pathway alcohol metabolism; cyclopentanol degradation; 5-valerolactone from cyclopentanol: step 2/2. Catalyzes a Baeyer-Villiger oxidation reaction, i.e. the insertion of an oxygen atom into a carbon-carbon bond adjacent to a carbonyl, which converts ketones to esters or lactones using NADPH as an electron donor. Converts cyclopentanone to 5-valerolactone, a step in the degradation pathway of cyclopentanol. Besides cycloalkanones, can also act on methylated and other alkylated cycloalkanones, and on methylated cycloalkenones, with high enantioselectivity in some cases. Cannot use NADH instead of NADPH. This chain is Cyclopentanone 1,2-monooxygenase (cpnB), found in Comamonas sp. (strain NCIMB 9872).